We begin with the raw amino-acid sequence, 228 residues long: UPF0758 protein CLB_3028 (228 aa).

The 123-residue stretch at 106–228 (KISTPLDVSN…YVSMKEKGTI (123 aa)) folds into the MPN domain. Positions 177, 179, and 190 each coordinate Zn(2+). The JAMM motif signature appears at 177 to 190 (HNHPSGDPTPSKED).

This sequence belongs to the UPF0758 family.

This is UPF0758 protein CLB_3028 from Clostridium botulinum (strain ATCC 19397 / Type A).